The sequence spans 75 residues: RNA-binding protein KhpA (75 aa).

Residues 29-75 enclose the KH domain; sequence KKVYEIVVNEEDVGQVIGKDGRTIKSLKILLSALMGDSKEITIKVVR.

Belongs to the KhpA RNA-binding protein family. In terms of assembly, forms a complex with KhpB.

The protein resides in the cytoplasm. Its function is as follows. A probable RNA chaperone. Forms a complex with KhpB which binds to cellular RNA and controls its expression. Plays a role in peptidoglycan (PG) homeostasis and cell length regulation. This Thermotoga maritima (strain ATCC 43589 / DSM 3109 / JCM 10099 / NBRC 100826 / MSB8) protein is RNA-binding protein KhpA.